The chain runs to 450 residues: Phosphoglucosamine mutase (450 aa).

Serine 101 functions as the Phosphoserine intermediate in the catalytic mechanism. Mg(2+) contacts are provided by serine 101, aspartate 240, aspartate 242, and aspartate 244. At serine 101 the chain carries Phosphoserine.

Belongs to the phosphohexose mutase family. Requires Mg(2+) as cofactor. Post-translationally, activated by phosphorylation.

The catalysed reaction is alpha-D-glucosamine 1-phosphate = D-glucosamine 6-phosphate. In terms of biological role, catalyzes the conversion of glucosamine-6-phosphate to glucosamine-1-phosphate. This is Phosphoglucosamine mutase from Streptococcus pneumoniae serotype 4 (strain ATCC BAA-334 / TIGR4).